We begin with the raw amino-acid sequence, 367 residues long: tRNA/tmRNA (uracil-C(5))-methyltransferase (367 aa).

5 residues coordinate S-adenosyl-L-methionine: Gln-190, Tyr-218, Asn-223, Glu-239, and Asp-299. Cys-324 serves as the catalytic Nucleophile. The active-site Proton acceptor is Glu-358.

It belongs to the class I-like SAM-binding methyltransferase superfamily. RNA M5U methyltransferase family. TrmA subfamily.

It carries out the reaction uridine(54) in tRNA + S-adenosyl-L-methionine = 5-methyluridine(54) in tRNA + S-adenosyl-L-homocysteine + H(+). The enzyme catalyses uridine(341) in tmRNA + S-adenosyl-L-methionine = 5-methyluridine(341) in tmRNA + S-adenosyl-L-homocysteine + H(+). Dual-specificity methyltransferase that catalyzes the formation of 5-methyluridine at position 54 (m5U54) in all tRNAs, and that of position 341 (m5U341) in tmRNA (transfer-mRNA). The sequence is that of tRNA/tmRNA (uracil-C(5))-methyltransferase from Serratia proteamaculans (strain 568).